The chain runs to 100 residues: uncharacterized protein (100 aa).

This is an uncharacterized protein from Acidianus convivator (ATV).